The primary structure comprises 548 residues: Probable zinc metalloprotease EGY1, chloroplastic (548 aa).

A chloroplast-targeting transit peptide spans 1-18; that stretch reads MGTLTSVAFAAAVNIRFR. A compositionally biased stretch (basic and acidic residues) spans 61–76; sequence NSNRDDSIGENGETHK. A disordered region spans residues 61–116; that stretch reads NSNRDDSIGENGETHKSSVVKTATFEEEDEETSKSSSTTSSSNEFGSDKTSMPSTI. The span at 103 to 116 shows a compositional bias: polar residues; the sequence is NEFGSDKTSMPSTI. The next 8 membrane-spanning stretches (helical) occupy residues 242–262, 290–310, 326–346, 361–381, 388–408, 416–436, 474–494, and 516–536; these read YVIALILFLLTIGSSVELGIA, LYPFVDAALPLAYGVLGILLF, LSIPYFIPNITLGSFGAITQF, LAGPFAGAALSVSMFAVGLFL, ANDLVQVPSMLFQGSLLLGLI, AALHAATVSIHPLVIAGWCGL, MLGLRVLGGPLALPWGLYVLI, and ALVGIALILVVLTLLPVWDEL.

The protein belongs to the peptidase M50B family. As to expression, expressed in roots, leaves, cotyledons, hypocotyls, stems, flowers and siliques.

It is found in the plastid. The protein resides in the chloroplast membrane. Functionally, membrane-associated and ATP-independent metalloprotease required for development of both thylakoid grana and well-organized lamellae in chloroplast. Required for the accumulation of chlorophyll and chlorophyll a/b binding (CAB) proteins (from both PS I and PS II) in chloroplast membranes, and for grana formation and normal chloroplast development. Involved in the regulation of nuclear gene expression in response to ammonium stress and interacts with ABA signaling. Carries out beta-casein degradation in an ATP-independent manner in vitro. In Arabidopsis thaliana (Mouse-ear cress), this protein is Probable zinc metalloprotease EGY1, chloroplastic (EGY1).